A 667-amino-acid polypeptide reads, in one-letter code: Probable oxidoreductase YyaE (667 aa).

The 4Fe-4S Mo/W bis-MGD-type domain occupies 2 to 59 (SKVHQSACPLNCWDSCGFLVTVDDGKVTKVDGDPNHPITEGKICGRGRMLETKTNSPD). [4Fe-4S] cluster is bound by residues C9, C13, C17, and C45.

The protein belongs to the prokaryotic molybdopterin-containing oxidoreductase family. It depends on Mo-bis(molybdopterin guanine dinucleotide) as a cofactor.

The sequence is that of Probable oxidoreductase YyaE (yyaE) from Bacillus subtilis (strain 168).